The chain runs to 207 residues: MARCKS-related protein 1-B (207 aa).

Composition is skewed to low complexity over residues 1–25 and 63–77; these read MGSQASKGGVAVEGKAAAADPAAVK and AGAGDAIEPAPAAEG. The tract at residues 1–207 is disordered; the sequence is MGSQASKGGV…STPAPSEQKE (207 aa). The N-myristoyl glycine moiety is linked to residue Gly-2. Basic and acidic residues predominate over residues 78–90; sequence EAAKPEGEATKET. Residues 93-116 are effector domain involved in lipid-binding; the sequence is KKKKKFSLKNSFKFKGISLKKSKK. The segment covering 100-109 has biased composition (low complexity); the sequence is LKNSFKFKGI. Composition is skewed to basic and acidic residues over residues 131–154 and 163–182; these read TEEKPEENGAATEEKKEEEAKAEE and PKAEEPAAKAEEPAAAKEEA. The span at 195–207 shows a compositional bias: polar residues; sequence ETNSTPAPSEQKE.

It belongs to the MARCKS family. Strongly expressed in brain and eye. Also detected at lower levels in muscle.

It is found in the cytoplasm. The protein resides in the cytoskeleton. The protein localises to the cell membrane. Involved in the control of cell movement by regulating actin cytoskeleton homeostasis and filopodium and lamellipodium formation. In Danio rerio (Zebrafish), this protein is MARCKS-related protein 1-B.